A 460-amino-acid chain; its full sequence is MQSIILIGKPNVGKSSLFNRMARQRIAITSDISGTTRDTNKTQIHIHSKKAMLIDSGGLDESDELFKNVKKNTLKVAKESDIILYLVDGKLAPDDEDRQFFYSLKKLGKPIALVVNKVDNKKDEERAWEFANFGVKEIFNLSVTHNVGLDELYEWLEKFLHEEFLIPDEEENLEDFLEHYEEGKEFQFKEVDQNHIRVGIVGRVNVGKSSLLNALVKQERSVVSSIAGTTIDPVNESVVHKDKVIEFVDTAGIRKRGKIQGLERFALNRTEKILSHSQIALLVLDAHEGFNELDERIAGLVAKHYLGVIIVLNKWDKSEMDFDKTVKELRLDRFKFLAYAPVISVSALSGKRVHVLLDKILQIFENFTQKIQTSKLNTLIENATRAHPLPHDYGKLVKIYYAVQYDLAPPKIALIMNRPKALHFSYKRYLQNQIRKEFNFEGVPLVIASRKKGSKENDES.

2 consecutive EngA-type G domains span residues 2-164 (QSII…HEEF) and 196-368 (IRVG…ENFT). Residues 8–15 (GKPNVGKS), 55–59 (DSGGL), 116–119 (NKVD), 202–209 (GRVNVGKS), 249–253 (DTAGI), and 313–316 (NKWD) each bind GTP. One can recognise a KH-like domain in the interval 369 to 453 (QKIQTSKLNT…PLVIASRKKG (85 aa)).

Belongs to the TRAFAC class TrmE-Era-EngA-EngB-Septin-like GTPase superfamily. EngA (Der) GTPase family. In terms of assembly, associates with the 50S ribosomal subunit.

Functionally, GTPase that plays an essential role in the late steps of ribosome biogenesis. This chain is GTPase Der, found in Campylobacter jejuni subsp. jejuni serotype O:23/36 (strain 81-176).